We begin with the raw amino-acid sequence, 681 residues long: UvrABC system protein C (681 aa).

Positions 16–95 (DSPGVYKFRD…IKEYDPRFNV (80 aa)) constitute a GIY-YIG domain. A UVR domain is found at 208-243 (GTYIRRLERQMTDAAEEMEYEKAARLRDDIGALKKA). A disordered region spans residues 650–681 (EIMEDEEPGTTAGSSQEPVSAGTSDERRGQET). Positions 660–672 (TAGSSQEPVSAGT) are enriched in polar residues.

This sequence belongs to the UvrC family. As to quaternary structure, interacts with UvrB in an incision complex.

The protein resides in the cytoplasm. In terms of biological role, the UvrABC repair system catalyzes the recognition and processing of DNA lesions. UvrC both incises the 5' and 3' sides of the lesion. The N-terminal half is responsible for the 3' incision and the C-terminal half is responsible for the 5' incision. The sequence is that of UvrABC system protein C from Streptomyces avermitilis (strain ATCC 31267 / DSM 46492 / JCM 5070 / NBRC 14893 / NCIMB 12804 / NRRL 8165 / MA-4680).